Consider the following 534-residue polypeptide: Paired box protein Pax-1 (534 aa).

The paired DNA-binding region spans 98 to 224 (TYGEVNQLGG…SSISRILRNK (127 aa)). The PAI subdomain stretch occupies residues 101-157 (EVNQLGGVFVNGRPLPNAIRLRIVELAQLGIRPCDISRQLRVSHGCVSKILARYNET). The segment at 176–224 (NVVKHIRDYKQGDPGIFAWEIRDRLLADGVCDKYNVPSVSSISRILRNK) is RED subdomain. 2 disordered regions span residues 424 to 480 (PSRE…AAAP) and 492 to 511 (EEEA…QAQP).

It localises to the nucleus. This protein is a transcriptional activator. It may play a role in the formation of segmented structures of the embryo. May play an important role in the normal development of the vertebral column. This is Paired box protein Pax-1 (PAX1) from Homo sapiens (Human).